Here is a 591-residue protein sequence, read N- to C-terminus: Complement component C8 beta chain (591 aa).

A signal peptide spans Met1–Gly32. Residues Glu33–Arg54 constitute a propeptide that is removed on maturation. The 54-residue stretch at Asp64–Gly117 folds into the TSP type-1 1 domain. Disulfide bonds link Cys65-Cys100, Cys76-Cys110, Cys79-Cys116, Cys122-Cys133, Cys127-Cys146, Cys140-Cys155, and Cys162-Cys200. 2 C-linked (Man) tryptophan glycosylation sites follow: Trp70 and Trp73. N-linked (GlcNAc...) asparagine glycosylation occurs at Asn101. In terms of domain architecture, LDL-receptor class A spans Val120–Arg157. 6 residues coordinate Ca(2+): Leu138, Asn141, Asp143, Asp145, Asp151, and Glu152. The region spanning Ile158 to His504 is the MACPF domain. A glycan (N-linked (GlcNAc...) asparagine) is linked at Asn243. A run of 4 beta stranded transmembrane segments spans residues Ser252 to Lys259, Gly262 to Ser269, Ala379 to Gly386, and Val392 to Ser399. A disulfide bridge connects residues Cys378 and Cys403. Thr418 bears the Phosphothreonine mark. 4 disulfides stabilise this stretch: Cys503–Cys550, Cys505–Cys521, Cys508–Cys523, and Cys525–Cys534. The EGF-like domain occupies Cys505–Glu535. One can recognise a TSP type-1 2 domain in the interval Asp545 to Ser591. Trp551 and Trp554 each carry a C-linked (Man) tryptophan glycan. The cysteines at positions 557 and 590 are disulfide-linked. The interval Cys568–Ser591 is disordered.

It belongs to the complement C6/C7/C8/C9 family. In terms of assembly, heterotrimer of 3 chains: alpha (C8A), beta (C8B) and gamma (C8G); the alpha and gamma chains are disulfide bonded. Component of the membrane attack complex (MAC), composed of complement C5b, C6, C7, C8A, C8B, C8G and multiple copies of the pore-forming subunit C9. In terms of processing, N-glycosylated; contains one or two bound glycans. Not O-glycosylated.

Its subcellular location is the secreted. The protein localises to the target cell membrane. Its activity is regulated as follows. Membrane attack complex (MAC) assembly is inhibited by CD59, thereby protecting self-cells from damage during complement activation. CD59 acts by binding to the beta-haipins of C8 (C8A and C8B), forming an intermolecular beta-sheet that prevents incorporation of the multiple copies of C9 required for complete formation of the osmolytic pore. MAC assembly is also inhibited by clusterin (CLU) chaperones that inhibit polymerization of C9. Its function is as follows. Component of the membrane attack complex (MAC), a multiprotein complex activated by the complement cascade, which inserts into a target cell membrane and forms a pore, leading to target cell membrane rupture and cell lysis. The MAC is initiated by proteolytic cleavage of C5 into complement C5b in response to the classical, alternative, lectin and GZMK complement pathways. The complement pathways consist in a cascade of proteins that leads to phagocytosis and breakdown of pathogens and signaling that strengthens the adaptive immune system. C8B, together with C8A and C8G, inserts into the target membrane, but does not form pores by itself. During MAC assembly, associates with C5b, C6 and C7 to form the C5b8 intermediate complex that inserts into the target membrane and traverses the bilayer increasing membrane rigidity. The chain is Complement component C8 beta chain from Homo sapiens (Human).